A 351-amino-acid chain; its full sequence is tRNA N6-adenosine threonylcarbamoyltransferase (351 aa).

Fe cation contacts are provided by histidine 111 and histidine 115. Substrate-binding positions include 134 to 138, aspartate 167, glycine 180, and asparagine 276; that span reads LVSGG. A Fe cation-binding site is contributed by aspartate 304.

It belongs to the KAE1 / TsaD family. The cofactor is Fe(2+).

The protein localises to the cytoplasm. The catalysed reaction is L-threonylcarbamoyladenylate + adenosine(37) in tRNA = N(6)-L-threonylcarbamoyladenosine(37) in tRNA + AMP + H(+). Required for the formation of a threonylcarbamoyl group on adenosine at position 37 (t(6)A37) in tRNAs that read codons beginning with adenine. Is involved in the transfer of the threonylcarbamoyl moiety of threonylcarbamoyl-AMP (TC-AMP) to the N6 group of A37, together with TsaE and TsaB. TsaD likely plays a direct catalytic role in this reaction. This Marinobacter nauticus (strain ATCC 700491 / DSM 11845 / VT8) (Marinobacter aquaeolei) protein is tRNA N6-adenosine threonylcarbamoyltransferase.